We begin with the raw amino-acid sequence, 496 residues long: Fizzy-related protein homolog (496 aa).

Disordered stretches follow at residues 28 to 51 (RRTLTPASSPVSSPSKHGDRFIPS), 64 to 88 (INENEKSPSQNRKAKDATSDNGKDG), and 105 to 166 (EKVQ…SPRK). Position 32 is a phosphothreonine (Thr32). The span at 32–42 (TPASSPVSSPS) shows a compositional bias: polar residues. A Phosphoserine modification is found at Ser36. The tract at residues 47–52 (RFIPSR) is involved in APC/FZR1 E3 ubiquitin-protein ligase complex activity. N6-acetyllysine is present on Lys69. Composition is skewed to basic and acidic residues over residues 76–86 (KAKDATSDNGK) and 106–126 (KVQDPQTEDRRLQPSTPEKKG). A phosphoserine mark is found at Ser133, Ser138, Ser146, and Ser151. Residues 146–160 (SPYSLSPVSNKSQKL) are compositionally biased toward polar residues. Lys159 bears the N6-acetyllysine mark. WD repeat units lie at residues 182–222 (PELQ…VTRL), 227–266 (VEGDSVTSVGWSERGNLVAVGTHKGFVQIWDAAAGKKLSM), 269–306 (GHTARVGALAWNAEQLSSGSRDRMILQRDIRTPPLQSE), 311–350 (GHRQEVCGLKWSTDHQLLASGGNDNKLLVWNHSSLSPVQQ), 353–395 (EHLA…PLQC), 397–438 (DTGS…QVAK), and 441–480 (GHSYRVLYLAMSPDGEAIVTGAGDETLRFWNVFSKTRSTK).

This sequence belongs to the WD repeat CDC20/Fizzy family. In terms of assembly, the unphosphorylated form interacts with APC/C during mitosis. Interacts with NINL. Interacts (in complex with the anaphase promoting complex APC) with MAD2L2; inhibits FZR1-mediated APC/C activation. Interacts with SIRT2 and USP37. Interacts (via WD repeats) with MAK. Interacts with RBBP8/CtIP; this interaction leads to RBBP8 proteasomal degradation. Interacts with HECW2. Interacts with SASS6; the interaction is regulated by CENATAC and leads to SASS6 proteasomal degradation. Interacts (via N-terminus) with CCNF. Interacts with CDC6. Interacts with TK1 (via the KEN box). In terms of processing, acetylated. Deacetylated by SIRT2 at Lys-69 and Lys-159; deacetylation enhances the interaction of FZR1 with CDC27, leading to activation of anaphase promoting complex/cyclosome (APC/C). Post-translationally, following DNA damage, it is dephosphorylated by CDC14B in G2 phase, leading to its reassociation with the APC/C, and allowing an efficient G2 DNA damage checkpoint. Phosphorylated by MAK. Ubiquitinated by the SCF(CCNF) E3 ubiquitin-protein ligase complex; leading to its degradation by the proteasome. Isoform 2 is expressed at high levels in heart, liver, spleen and some cancer cell lines whereas isoform 3 is expressed only at low levels in these tissues.

It is found in the nucleus. The protein localises to the cytoplasm. The protein operates within protein modification; protein ubiquitination. In terms of biological role, substrate-specific adapter for the anaphase promoting complex/cyclosome (APC/C) E3 ubiquitin-protein ligase complex. Associates with the APC/C in late mitosis, in replacement of CDC20, and activates the APC/C during anaphase and telophase. The APC/C remains active in degrading substrates to ensure that positive regulators of the cell cycle do not accumulate prematurely. At the G1/S transition FZR1 is phosphorylated, leading to its dissociation from the APC/C. Following DNA damage, it is required for the G2 DNA damage checkpoint: its dephosphorylation and reassociation with the APC/C leads to the ubiquitination of PLK1, preventing entry into mitosis. Acts as an adapter for APC/C to target the DNA-end resection factor RBBP8/CtIP for ubiquitination and subsequent proteasomal degradation. Through the regulation of RBBP8/CtIP protein turnover, may play a role in DNA damage response, favoring DNA double-strand repair through error-prone non-homologous end joining (NHEJ) over error-free, RBBP8-mediated homologous recombination (HR). This is Fizzy-related protein homolog from Homo sapiens (Human).